The primary structure comprises 421 residues: MKDLENIPALMEDIGKRAKAAAQQLATASAAQKEQALNAAADAVWAQRGEIIAANAKDLEFGRDKGLSSAMMDRLMLDEARIQGIVDGLRAVAAQADPVGAVLDEWTQPSGLRIQRVRTPLGVIGVIYESRPNVTADAGALCLKSGNAVILRGGSESLHSAQAIHGCLAAGLRAADLPEDAVQLVPTRDRAAVQELLTMTAYVDVIVPRGGKGLVGLVQREARVPVFAHLEGIVHIYLDKDADRKKAIDVVLNAKTRRTGICGAAECLLIHEDIADSIGKDVLDLLAMGGVEIHAEEGLPGPDSMQVATSEDWGKEYLDAIIAAKKVASIDEAIAHIRRYHSAHTDCIITENDAAVAQFFSELDSAILMHNASTQFADGGEFGMGAEIGIATGKMHARGPVGATQLTSFKYLVRGDGTVRA.

This sequence belongs to the gamma-glutamyl phosphate reductase family.

It is found in the cytoplasm. The catalysed reaction is L-glutamate 5-semialdehyde + phosphate + NADP(+) = L-glutamyl 5-phosphate + NADPH + H(+). Its pathway is amino-acid biosynthesis; L-proline biosynthesis; L-glutamate 5-semialdehyde from L-glutamate: step 2/2. Its function is as follows. Catalyzes the NADPH-dependent reduction of L-glutamate 5-phosphate into L-glutamate 5-semialdehyde and phosphate. The product spontaneously undergoes cyclization to form 1-pyrroline-5-carboxylate. The protein is Gamma-glutamyl phosphate reductase of Ruegeria sp. (strain TM1040) (Silicibacter sp.).